Reading from the N-terminus, the 525-residue chain is Peptide chain release factor 3 (525 aa).

The tr-type G domain occupies 8–276; that stretch reads AMRRTFAIIS…AFVKEAPPPQ (269 aa). Residues 17–24, 85–89, and 139–142 contribute to the GTP site; these read SHPDAGKT, DTPGH, and NKMD.

The protein belongs to the TRAFAC class translation factor GTPase superfamily. Classic translation factor GTPase family. PrfC subfamily.

It is found in the cytoplasm. In terms of biological role, increases the formation of ribosomal termination complexes and stimulates activities of RF-1 and RF-2. It binds guanine nucleotides and has strong preference for UGA stop codons. It may interact directly with the ribosome. The stimulation of RF-1 and RF-2 is significantly reduced by GTP and GDP, but not by GMP. This is Peptide chain release factor 3 from Coxiella burnetii (strain CbuK_Q154) (Coxiella burnetii (strain Q154)).